The sequence spans 457 residues: Peptidyl-prolyl cis-trans isomerase FKBP5 (457 aa).

The residue at position 1 (Met-1) is an N-acetylmethionine. A compositionally biased stretch (basic and acidic residues) spans Met-1–Arg-11. The tract at residues Met-1–Lys-28 is disordered. The residue at position 28 (Lys-28) is an N6-acetyllysine. 2 consecutive PPIase FKBP-type domains span residues Gly-50 to Lys-138 and Gly-165 to Glu-251. TPR repeat units lie at residues Ala-268 to Glu-301, Leu-317 to Asn-350, and Glu-351 to Asn-384. Residues Glu-424–Val-457 form a disordered region. At Ser-445 the chain carries Phosphoserine. Residues Ala-447–Val-457 show a composition bias toward basic and acidic residues.

As to quaternary structure, part of a heteromultimeric cytoplasmic complex with HSP90AA1, HSPA1A/HSPA1B and steroid receptors. Upon ligand binding dissociates from the complex and FKBP4 takes its place. Interacts with functionally mature heterooligomeric progesterone receptor complexes along with HSP90 and TEBP. Interacts with NR3C1. Interacts with Akt/AKT1 and PHLPP1; enhancing dephosphorylation and subsequent activation of Akt/AKT1. Interacts with IFI44L; this interaction modulates the kinase activity of IKBKB and IKBKE. Interacts with IKBKB and IKBKE. Acetylation impairs ability to promote interaction between Akt/AKT1 and PHLPP1. Deacetylation by SIRT7 promotes interaction between Akt/AKT1 and PHLPP1, leading to suppress Akt/AKT1 activation. In terms of processing, ubiquitinated, leading to degradation in a proteasome-dependent manner. Deubiquitinated by USP49, leading to stabilization.

Its subcellular location is the cytoplasm. The protein localises to the nucleus. The enzyme catalyses [protein]-peptidylproline (omega=180) = [protein]-peptidylproline (omega=0). Its activity is regulated as follows. Inhibited by both FK506 and rapamycin. Its function is as follows. Immunophilin protein with PPIase and co-chaperone activities. Component of unligated steroid receptors heterocomplexes through interaction with heat-shock protein 90 (HSP90). Plays a role in the intracellular trafficking of heterooligomeric forms of steroid hormone receptors maintaining the complex into the cytoplasm when unliganded. Acts as a regulator of Akt/AKT1 activity by promoting the interaction between Akt/AKT1 and PHLPP1, thereby enhancing dephosphorylation and subsequent activation of Akt/AKT1. Interacts with IKBKE and IKBKB which facilitates IKK complex assembly leading to increased IKBKE and IKBKB kinase activity, NF-kappaB activation, and IFN production. The chain is Peptidyl-prolyl cis-trans isomerase FKBP5 (FKBP5) from Saguinus oedipus (Cotton-top tamarin).